A 619-amino-acid polypeptide reads, in one-letter code: Chaperone protein HscA homolog (619 aa).

This sequence belongs to the heat shock protein 70 family.

Its function is as follows. Chaperone involved in the maturation of iron-sulfur cluster-containing proteins. Has a low intrinsic ATPase activity which is markedly stimulated by HscB. This Haemophilus influenzae (strain PittGG) protein is Chaperone protein HscA homolog.